A 417-amino-acid chain; its full sequence is MPEINNFTMNFGPQHPSAHGVLRLVLELDGEVIERADPHIGLLHRATEKLAENKTYLQNLPYMDRLDYVSMLCNEHAYCLAVEKLLGVEVPVRAQYIRTLFDEITRILNHLLWLGAYALDVGAMSVFLYCFREREDLMDVYEAVSGARMHAAYYRPGGVYRDLPAQMPQYQPSPYRDARRLQELNANRQGSMLDFIEDFARRFPTYVDEYETLLTDNRIWKQRTVGIGVVGPERAIQLGFTGPMLRSSGVAWDLRRTQPYAAYADLDFDIPVGKTGDCYDRYLVRVAEMRQSNRIIVQCVDWLRKNPGPVITDDFKIAAPSREEMKTSMEALIHHFKLFSEGMAVPAGEVYAAVEAPKGEFGIYMISDGANKPYRMKIRAPGFPHLAAMDEMARGHMIADVVAILSTMDIVFGEIDR.

It belongs to the complex I 49 kDa subunit family. NDH-1 is composed of 14 different subunits. Subunits NuoB, C, D, E, F, and G constitute the peripheral sector of the complex.

The protein localises to the cell inner membrane. The catalysed reaction is a quinone + NADH + 5 H(+)(in) = a quinol + NAD(+) + 4 H(+)(out). In terms of biological role, NDH-1 shuttles electrons from NADH, via FMN and iron-sulfur (Fe-S) centers, to quinones in the respiratory chain. The immediate electron acceptor for the enzyme in this species is believed to be ubiquinone. Couples the redox reaction to proton translocation (for every two electrons transferred, four hydrogen ions are translocated across the cytoplasmic membrane), and thus conserves the redox energy in a proton gradient. This Acidithiobacillus ferrooxidans (strain ATCC 53993 / BNL-5-31) (Leptospirillum ferrooxidans (ATCC 53993)) protein is NADH-quinone oxidoreductase subunit D.